The following is a 367-amino-acid chain: Uroporphyrinogen decarboxylase (367 aa).

M1 carries the post-translational modification N-acetylmethionine. Positions 37, 39, 41, 50, 86, 164, 219, and 339 each coordinate coproporphyrinogen I. Residues R37, A39, and R41 each coordinate coproporphyrinogen III. Coproporphyrinogen III-binding residues include D86, Y164, S219, and H339.

The protein belongs to the uroporphyrinogen decarboxylase family. In terms of assembly, homodimer.

The protein localises to the cytoplasm. The protein resides in the cytosol. The catalysed reaction is uroporphyrinogen III + 4 H(+) = coproporphyrinogen III + 4 CO2. It carries out the reaction uroporphyrinogen I + 4 H(+) = coproporphyrinogen I + 4 CO2. It participates in porphyrin-containing compound metabolism; protoporphyrin-IX biosynthesis; coproporphyrinogen-III from 5-aminolevulinate: step 4/4. Functionally, catalyzes the sequential decarboxylation of the four acetate side chains of uroporphyrinogen to form coproporphyrinogen and participates in the fifth step in the heme biosynthetic pathway. Isomer I or isomer III of uroporphyrinogen may serve as substrate, but only coproporphyrinogen III can ultimately be converted to heme. In vitro also decarboxylates pentacarboxylate porphyrinogen I. This is Uroporphyrinogen decarboxylase from Homo sapiens (Human).